Consider the following 145-residue polypeptide: Superoxide dismutase [Mn/Fe] (145 aa).

His-10 and His-64 together coordinate Fe(3+). Mn(2+)-binding residues include His-10 and His-64.

Belongs to the iron/manganese superoxide dismutase family. Mn(2+) is required as a cofactor. It depends on Fe(3+) as a cofactor.

The catalysed reaction is 2 superoxide + 2 H(+) = H2O2 + O2. In terms of biological role, destroys superoxide anion radicals which are normally produced within the cells and which are toxic to biological systems. Catalyzes the dismutation of superoxide anion radicals into O2 and H2O2 by successive reduction and oxidation of the transition metal ion at the active site. This chain is Superoxide dismutase [Mn/Fe] (sodA), found in Streptococcus parasanguinis.